The chain runs to 373 residues: L-threonine 3-dehydrogenase, mitochondrial (373 aa).

NAD(+) contacts are provided by residues 62–67 (GGLGQL), 88–90 (DIR), 106–107 (NI), Tyr195, Lys199, and Ile225. Tyr195 functions as the Proton donor/acceptor in the catalytic mechanism.

This sequence belongs to the NAD(P)-dependent epimerase/dehydratase family. In terms of assembly, homodimer.

The protein localises to the mitochondrion. The catalysed reaction is L-threonine + NAD(+) = (2S)-2-amino-3-oxobutanoate + NADH + H(+). It functions in the pathway amino-acid degradation; L-threonine degradation via oxydo-reductase pathway; glycine from L-threonine: step 1/2. Its function is as follows. Catalyzes the NAD(+)-dependent oxidation of L-threonine to 2-amino-3-ketobutyrate, mediating L-threonine catabolism. This chain is L-threonine 3-dehydrogenase, mitochondrial, found in Mus musculus (Mouse).